The primary structure comprises 873 residues: DNA mismatch repair protein MutS (873 aa).

Gly-620 to Ser-627 is a binding site for ATP.

Belongs to the DNA mismatch repair MutS family.

In terms of biological role, this protein is involved in the repair of mismatches in DNA. It is possible that it carries out the mismatch recognition step. This protein has a weak ATPase activity. The protein is DNA mismatch repair protein MutS of Ruminiclostridium cellulolyticum (strain ATCC 35319 / DSM 5812 / JCM 6584 / H10) (Clostridium cellulolyticum).